The following is a 489-amino-acid chain: Rhamnulokinase (489 aa).

13 to 17 (ASSGR) provides a ligand contact to ATP. Cysteines 68 and 222 form a disulfide. Substrate is bound by residues glycine 83 and 236–238 (HDT). Aspartate 237 (proton acceptor) is an active-site residue. Threonine 259 provides a ligand contact to ATP. Position 296 (asparagine 296) interacts with substrate. Glutamine 304 lines the ATP pocket. A disulfide bridge links cysteine 353 with cysteine 370. ATP is bound at residue glycine 402. Cysteine 413 and cysteine 417 are joined by a disulfide.

It belongs to the rhamnulokinase family. Requires Mg(2+) as cofactor.

It catalyses the reaction L-rhamnulose + ATP = L-rhamnulose 1-phosphate + ADP + H(+). It participates in carbohydrate degradation; L-rhamnose degradation; glycerone phosphate from L-rhamnose: step 2/3. In terms of biological role, involved in the catabolism of L-rhamnose (6-deoxy-L-mannose). Catalyzes the transfer of the gamma-phosphate group from ATP to the 1-hydroxyl group of L-rhamnulose to yield L-rhamnulose 1-phosphate. In Salmonella paratyphi A (strain AKU_12601), this protein is Rhamnulokinase.